Consider the following 553-residue polypeptide: Cysteine desulfurase IscS (553 aa).

Low complexity predominate over residues 102–122 (NNISSNNTQYNNNSSNSGSLN). Residues 102–125 (NNISSNNTQYNNNSSNSGSLNDEG) form a disordered region.

Belongs to the class-V pyridoxal-phosphate-dependent aminotransferase family. NifS/IscS subfamily. As to quaternary structure, homotetramer. Interacts with Isd11; the interaction enhances cysteine desulfurase activity of IscS. Interacts with IscU. Component of a complex, at least composed of IscS, Isd11 and IscU. Pyridoxal 5'-phosphate serves as cofactor.

Its subcellular location is the mitochondrion. The catalysed reaction is (sulfur carrier)-H + L-cysteine = (sulfur carrier)-SH + L-alanine. Its pathway is cofactor biosynthesis; iron-sulfur cluster biosynthesis. In terms of biological role, catalyzes sulfur activation and mobilization in iron-sulfur cluster formation (ISC) pathway for iron-sulfur (Fe-S) cluster biogenesis. Active when in complex with a partner protein Isd11. The polypeptide is Cysteine desulfurase IscS (Plasmodium falciparum (isolate 3D7)).